A 1091-amino-acid polypeptide reads, in one-letter code: Isoleucine--tRNA ligase (1091 aa).

The 'HIGH' region motif lies at P48–H58. The 'KMSKS' region signature appears at K625 to A629. K628 lines the ATP pocket.

The protein belongs to the class-I aminoacyl-tRNA synthetase family. IleS type 2 subfamily. Monomer. It depends on Zn(2+) as a cofactor.

It localises to the cytoplasm. It catalyses the reaction tRNA(Ile) + L-isoleucine + ATP = L-isoleucyl-tRNA(Ile) + AMP + diphosphate. Its function is as follows. Catalyzes the attachment of isoleucine to tRNA(Ile). As IleRS can inadvertently accommodate and process structurally similar amino acids such as valine, to avoid such errors it has two additional distinct tRNA(Ile)-dependent editing activities. One activity is designated as 'pretransfer' editing and involves the hydrolysis of activated Val-AMP. The other activity is designated 'posttransfer' editing and involves deacylation of mischarged Val-tRNA(Ile). The polypeptide is Isoleucine--tRNA ligase (Treponema pallidum (strain Nichols)).